The sequence spans 251 residues: Probable transcriptional regulatory protein Swol_1435 (251 aa).

The segment at 1 to 23 (MAGHSKWANIKHKKARSDEKRGK) is disordered.

Belongs to the TACO1 family.

The protein localises to the cytoplasm. In Syntrophomonas wolfei subsp. wolfei (strain DSM 2245B / Goettingen), this protein is Probable transcriptional regulatory protein Swol_1435.